The primary structure comprises 264 residues: Thymidylate synthase (264 aa).

R21 provides a ligand contact to dUMP. Position 51 (H51) interacts with (6R)-5,10-methylene-5,6,7,8-tetrahydrofolate. 126–127 (RR) provides a ligand contact to dUMP. C146 functions as the Nucleophile in the catalytic mechanism. DUMP-binding positions include 166–169 (RSCD), N177, and 207–209 (HLY). Residue D169 coordinates (6R)-5,10-methylene-5,6,7,8-tetrahydrofolate. S263 provides a ligand contact to (6R)-5,10-methylene-5,6,7,8-tetrahydrofolate.

This sequence belongs to the thymidylate synthase family. Bacterial-type ThyA subfamily. Homodimer.

The protein localises to the cytoplasm. The catalysed reaction is dUMP + (6R)-5,10-methylene-5,6,7,8-tetrahydrofolate = 7,8-dihydrofolate + dTMP. Its pathway is pyrimidine metabolism; dTTP biosynthesis. Functionally, catalyzes the reductive methylation of 2'-deoxyuridine-5'-monophosphate (dUMP) to 2'-deoxythymidine-5'-monophosphate (dTMP) while utilizing 5,10-methylenetetrahydrofolate (mTHF) as the methyl donor and reductant in the reaction, yielding dihydrofolate (DHF) as a by-product. This enzymatic reaction provides an intracellular de novo source of dTMP, an essential precursor for DNA biosynthesis. This is Thymidylate synthase from Buchnera aphidicola subsp. Schizaphis graminum (strain Sg).